Reading from the N-terminus, the 468-residue chain is Glutamate--tRNA ligase (468 aa).

The short motif at 8-18 (PSPTGFLHVGG) is the 'HIGH' region element. Cysteine 97, cysteine 99, cysteine 124, and aspartate 126 together coordinate Zn(2+). The short motif at 236 to 240 (KLSKR) is the 'KMSKS' region element. Lysine 239 is a binding site for ATP.

This sequence belongs to the class-I aminoacyl-tRNA synthetase family. Glutamate--tRNA ligase type 1 subfamily. Monomer. It depends on Zn(2+) as a cofactor.

It is found in the cytoplasm. It carries out the reaction tRNA(Glu) + L-glutamate + ATP = L-glutamyl-tRNA(Glu) + AMP + diphosphate. Its function is as follows. Catalyzes the attachment of glutamate to tRNA(Glu) in a two-step reaction: glutamate is first activated by ATP to form Glu-AMP and then transferred to the acceptor end of tRNA(Glu). The chain is Glutamate--tRNA ligase from Francisella tularensis subsp. mediasiatica (strain FSC147).